A 227-amino-acid chain; its full sequence is Fibrillarin-like rRNA/tRNA 2'-O-methyltransferase (227 aa).

S-adenosyl-L-methionine is bound by residues 86–87, 105–106, 130–131, and 150–153; these read TT, EF, DA, and DVAQ.

Belongs to the methyltransferase superfamily. Fibrillarin family. Interacts with nop5. Component of box C/D small ribonucleoprotein (sRNP) particles that contain rpl7ae, FlpA and nop5, plus a guide RNA.

Its function is as follows. Involved in pre-rRNA and tRNA processing. Utilizes the methyl donor S-adenosyl-L-methionine to catalyze the site-specific 2'-hydroxyl methylation of ribose moieties in rRNA and tRNA. Site specificity is provided by a guide RNA that base pairs with the substrate. Methylation occurs at a characteristic distance from the sequence involved in base pairing with the guide RNA. The protein is Fibrillarin-like rRNA/tRNA 2'-O-methyltransferase of Pyrococcus horikoshii (strain ATCC 700860 / DSM 12428 / JCM 9974 / NBRC 100139 / OT-3).